Here is a 1189-residue protein sequence, read N- to C-terminus: Nucleolar protein NET1 (1189 aa).

Phosphoserine is present on residues serine 60 and serine 166. 2 disordered regions span residues serine 160 to glycine 260 and threonine 345 to lysine 1189. Residues serine 166 to serine 180 are compositionally biased toward low complexity. Polar residues predominate over residues isoleucine 200–valine 210. A phosphoserine mark is found at serine 231 and serine 252. Residues leucine 244–proline 253 are compositionally biased toward pro residues. Residues proline 368–glutamate 381 are compositionally biased toward basic and acidic residues. Positions proline 391 to glycine 407 are enriched in low complexity. Polar residues predominate over residues alanine 432–lysine 450. Serine 437, serine 439, serine 447, and serine 452 each carry phosphoserine. The segment covering alanine 470 to lysine 486 has biased composition (polar residues). Serine 497 carries the phosphoserine modification. Over residues asparagine 526–isoleucine 543 the composition is skewed to basic and acidic residues. The span at isoleucine 590 to aspartate 601 shows a compositional bias: acidic residues. Residues serine 641–leucine 657 are compositionally biased toward polar residues. The span at lysine 659 to proline 668 shows a compositional bias: basic and acidic residues. Phosphothreonine is present on threonine 676. The span at lysine 682 to alanine 691 shows a compositional bias: low complexity. A compositionally biased stretch (basic and acidic residues) spans lysine 692–glutamate 702. Over residues threonine 710 to aspartate 725 the composition is skewed to acidic residues. Basic and acidic residues predominate over residues lysine 756–lysine 777. Over residues lysine 778–serine 792 the composition is skewed to polar residues. The segment covering lysine 806–threonine 815 has biased composition (basic and acidic residues). A compositionally biased stretch (low complexity) spans serine 822–valine 833. Serine 830 carries the phosphoserine modification. Basic and acidic residues-rich tracts occupy residues aspartate 884–lysine 897, alanine 905–serine 919, and alanine 945–alanine 954. The span at serine 969–serine 999 shows a compositional bias: low complexity. Residues arginine 1023 to isoleucine 1039 show a composition bias toward polar residues. Position 1042 is a phosphothreonine (threonine 1042). Residues serine 1055–serine 1070 are compositionally biased toward low complexity. Serine 1056 and serine 1059 each carry phosphoserine. Residues proline 1095–glutamine 1109 are compositionally biased toward basic and acidic residues. Composition is skewed to low complexity over residues aspartate 1123 to serine 1137 and serine 1158 to leucine 1169.

The protein to yeast YKR010c. In terms of assembly, component of the RENT complex which is composed of at least NET1, CDC14 and SIR2. Interacts with NSI1. Phosphorylated by CDC5.

The protein resides in the nucleus. The protein localises to the nucleolus. Has a role in chromosome maintenance and is involved in mitotic exit. Inhibits the action of CDC14 by sequestering it in the nucleolus. Also binds to RNA polymerase I and stimulates rRNA synthesis. Influences RDNA chromatin by tethering SIR2 to rDNA in the nucleolus. The chain is Nucleolar protein NET1 (NET1) from Saccharomyces cerevisiae (strain ATCC 204508 / S288c) (Baker's yeast).